Consider the following 359-residue polypeptide: UPF0284 protein MTH_1426 (359 aa).

The protein belongs to the UPF0284 family.

This Methanothermobacter thermautotrophicus (strain ATCC 29096 / DSM 1053 / JCM 10044 / NBRC 100330 / Delta H) (Methanobacterium thermoautotrophicum) protein is UPF0284 protein MTH_1426.